Reading from the N-terminus, the 166-residue chain is Sec-independent protein translocase protein TatB (166 aa).

The chain crosses the membrane as a helical span at residues 2 to 22 (FDGIGFMELLLIGVLGLVVLG). A disordered region spans residues 69-166 (SKGLSNLSPE…DTRSNPKANG (98 aa)). 2 stretches are compositionally biased toward polar residues: residues 88–97 (QAAQSVNRPY) and 112–132 (QIYS…SQAN). Positions 133-153 (PTATVEASPAPASPATPSEPS) are enriched in low complexity. Over residues 155-166 (GADTRSNPKANG) the composition is skewed to polar residues.

The protein belongs to the TatB family. As to quaternary structure, the Tat system comprises two distinct complexes: a TatABC complex, containing multiple copies of TatA, TatB and TatC subunits, and a separate TatA complex, containing only TatA subunits. Substrates initially bind to the TatABC complex, which probably triggers association of the separate TatA complex to form the active translocon.

It localises to the cell inner membrane. Its function is as follows. Part of the twin-arginine translocation (Tat) system that transports large folded proteins containing a characteristic twin-arginine motif in their signal peptide across membranes. Together with TatC, TatB is part of a receptor directly interacting with Tat signal peptides. TatB may form an oligomeric binding site that transiently accommodates folded Tat precursor proteins before their translocation. This chain is Sec-independent protein translocase protein TatB, found in Shewanella baltica (strain OS155 / ATCC BAA-1091).